The sequence spans 96 residues: 5-hydroxytryptamine receptor 2B (96 aa).

Residues 1-8 (CNQSTLQM) lie on the Extracellular side of the membrane. Asn2 is a glycosylation site (N-linked (GlcNAc...) asparagine). A helical transmembrane segment spans residues 9 to 30 (LLEIFVWIGYVSSGVNPLVYTL). Positions 24–28 (NPLVY) match the NPxxY motif; important for ligand-induced conformation changes and signaling motif. Over 31–96 (FNKTFRDAFG…STMYQSPVRL (66 aa)) the chain is Cytoplasmic. The S-palmitoyl cysteine moiety is linked to residue Cys45.

The protein belongs to the G-protein coupled receptor 1 family. As to quaternary structure, interacts (via C-terminus) with MPDZ.

The protein resides in the cell membrane. It localises to the synapse. It is found in the synaptosome. In terms of biological role, G-protein coupled receptor for 5-hydroxytryptamine (serotonin). Also functions as a receptor for various ergot alkaloid derivatives and psychoactive substances. Ligand binding causes a conformation change that triggers signaling via guanine nucleotide-binding proteins (G proteins) and modulates the activity of downstream effectors. HTR2B is coupled to G(q)/G(11) G alpha proteins and activates phospholipase C-beta, releasing diacylglycerol (DAG) and inositol 1,4,5-trisphosphate (IP3) second messengers that modulate the activity of phosphatidylinositol 3-kinase and promote the release of Ca(2+) ions from intracellular stores, respectively. Beta-arrestin family members inhibit signaling via G proteins and mediate activation of alternative signaling pathways. Plays a role in the regulation of dopamine and 5-hydroxytryptamine release, 5-hydroxytryptamine uptake and in the regulation of extracellular dopamine and 5-hydroxytryptamine levels, and thereby affects neural activity. May play a role in the perception of pain. Plays a role in the regulation of behavior, including impulsive behavior. Required for normal proliferation of embryonic cardiac myocytes and normal heart development. Protects cardiomyocytes against apoptosis. Plays a role in the adaptation of pulmonary arteries to chronic hypoxia. Plays a role in vasoconstriction. Required for normal osteoblast function and proliferation, and for maintaining normal bone density. Required for normal proliferation of the interstitial cells of Cajal in the intestine. This chain is 5-hydroxytryptamine receptor 2B (HTR2B), found in Cavia porcellus (Guinea pig).